Here is a 406-residue protein sequence, read N- to C-terminus: Glutamyl-tRNA(Gln) amidotransferase subunit D (406 aa).

The Asparaginase/glutaminase domain maps to 68–390; sequence KSISILATGG…EEFINVFNRN (323 aa). Active-site residues include Thr-78, Thr-152, Asp-153, and Lys-230.

The protein belongs to the asparaginase 1 family. GatD subfamily. Heterodimer of GatD and GatE.

It catalyses the reaction L-glutamyl-tRNA(Gln) + L-glutamine + ATP + H2O = L-glutaminyl-tRNA(Gln) + L-glutamate + ADP + phosphate + H(+). Functionally, allows the formation of correctly charged Gln-tRNA(Gln) through the transamidation of misacylated Glu-tRNA(Gln) in organisms which lack glutaminyl-tRNA synthetase. The reaction takes place in the presence of glutamine and ATP through an activated gamma-phospho-Glu-tRNA(Gln). The GatDE system is specific for glutamate and does not act on aspartate. The polypeptide is Glutamyl-tRNA(Gln) amidotransferase subunit D (Thermoplasma volcanium (strain ATCC 51530 / DSM 4299 / JCM 9571 / NBRC 15438 / GSS1)).